Reading from the N-terminus, the 231-residue chain is UMP-CMP kinase (231 aa).

57-62 (GSGKGT) serves as a coordination point for ATP. Positions 77-106 (SAGDLLRREIASGSAYGSVILSTIREGKIV) are NMP. Residues arginine 83, 104–106 (KIV), and 131–134 (GFPR) each bind a ribonucleoside 5'-phosphate. Asparagine 138 provides a ligand contact to CMP. The LID stretch occupies residues 169–177 (NRNQGRVDD). An ATP-binding site is contributed by arginine 170. A ribonucleoside 5'-phosphate contacts are provided by arginine 174 and arginine 185. Glycine 213 is a binding site for ATP.

It belongs to the adenylate kinase family. UMP-CMP kinase subfamily. As to quaternary structure, monomer. It depends on Mg(2+) as a cofactor.

The protein resides in the cytoplasm. It is found in the nucleus. It carries out the reaction CMP + ATP = CDP + ADP. The catalysed reaction is dCMP + ATP = dCDP + ADP. The enzyme catalyses UMP + ATP = UDP + ADP. Functionally, catalyzes the phosphorylation of pyrimidine nucleoside monophosphates at the expense of ATP. Plays an important role in de novo pyrimidine nucleotide biosynthesis. Has preference for UMP and CMP as phosphate acceptors. This is UMP-CMP kinase from Prunus armeniaca (Apricot).